We begin with the raw amino-acid sequence, 391 residues long: Alkanesulfonate monooxygenase (391 aa).

The protein belongs to the SsuD family.

The enzyme catalyses an alkanesulfonate + FMNH2 + O2 = an aldehyde + FMN + sulfite + H2O + 2 H(+). Its function is as follows. Catalyzes the desulfonation of aliphatic sulfonates. The sequence is that of Alkanesulfonate monooxygenase from Rhodopseudomonas palustris (strain ATCC BAA-98 / CGA009).